The sequence spans 393 residues: Serine/threonine protein kinase AFUB_078980 (393 aa).

The 330-residue stretch at 61–390 (YQVLSKLGFG…APELLTDPWL (330 aa)) folds into the Protein kinase domain. ATP contacts are provided by residues 67 to 75 (LGFGANSTV) and K90. The active-site Proton acceptor is D190.

Belongs to the protein kinase superfamily. CMGC Ser/Thr protein kinase family.

It carries out the reaction L-seryl-[protein] + ATP = O-phospho-L-seryl-[protein] + ADP + H(+). It catalyses the reaction L-threonyl-[protein] + ATP = O-phospho-L-threonyl-[protein] + ADP + H(+). Serine/threonine protein kinase; part of the subtelomeric hrmA-associated cluster (HAC) containing genes that alter the hyphal surface (such as reduced total chitin or increased beta-glucan exposure) and perturb inter-hyphal interactions within the developing biofilms, resulting in a loss of vertically aligned polarized growing filaments. Consequently, this hypoxia-typic morphotype (called H-MORPH) with altered biofilm architecture leads to increased hypoxia fitness, increased host inflammation, rapid disease progression, and mortality in a murine model of invasive aspergillosis. The protein is Serine/threonine protein kinase AFUB_078980 of Aspergillus fumigatus (strain CBS 144.89 / FGSC A1163 / CEA10) (Neosartorya fumigata).